Consider the following 590-residue polypeptide: (+)-sabinene synthase, chloroplastic (590 aa).

Residues 1 to 51 constitute a chloroplast transit peptide; sequence MSSISINIAMPLNSLHNFERKPSKAWSTSCTAPAARLRASSSLQQEKPHQI. The Mg(2+) site is built by aspartate 343, aspartate 347, aspartate 487, threonine 491, and glutamate 495. Residues 343–347 carry the DDXXD motif motif; the sequence is DDVYD.

Belongs to the terpene synthase family. As to quaternary structure, monomer. It depends on Mg(2+) as a cofactor.

It is found in the plastid. It localises to the chloroplast. It carries out the reaction (2E)-geranyl diphosphate = (1R,5R)-sabinene + diphosphate. Its pathway is terpene metabolism; sabinene hydrate biosynthesis. Catalyzes the formation of the (-)-3-isothujone precursor sabinene from geranyl diphosphate. The enzyme also produces significant amounts of gamma-terpinene, terpinolene and limonene. This is (+)-sabinene synthase, chloroplastic from Salvia officinalis (Sage).